The chain runs to 257 residues: Cytochrome c oxidase subunit 3 (257 aa).

The next 6 membrane-spanning stretches (helical) occupy residues 13–33 (PWPI…VSYF), 36–56 (LSMY…FQWW), 80–100 (GMIL…WAFF), 154–174 (YISA…FTMF), 195–215 (FFMT…FLLV), and 237–257 (AWYW…MYWW).

This sequence belongs to the cytochrome c oxidase subunit 3 family. As to quaternary structure, component of the cytochrome c oxidase (complex IV, CIV), a multisubunit enzyme composed of a catalytic core of 3 subunits and several supernumerary subunits. The complex exists as a monomer or a dimer and forms supercomplexes (SCs) in the inner mitochondrial membrane with ubiquinol-cytochrome c oxidoreductase (cytochrome b-c1 complex, complex III, CIII).

It is found in the mitochondrion inner membrane. The catalysed reaction is 4 Fe(II)-[cytochrome c] + O2 + 8 H(+)(in) = 4 Fe(III)-[cytochrome c] + 2 H2O + 4 H(+)(out). Component of the cytochrome c oxidase, the last enzyme in the mitochondrial electron transport chain which drives oxidative phosphorylation. The respiratory chain contains 3 multisubunit complexes succinate dehydrogenase (complex II, CII), ubiquinol-cytochrome c oxidoreductase (cytochrome b-c1 complex, complex III, CIII) and cytochrome c oxidase (complex IV, CIV), that cooperate to transfer electrons derived from NADH and succinate to molecular oxygen, creating an electrochemical gradient over the inner membrane that drives transmembrane transport and the ATP synthase. Cytochrome c oxidase is the component of the respiratory chain that catalyzes the reduction of oxygen to water. Electrons originating from reduced cytochrome c in the intermembrane space (IMS) are transferred via the dinuclear copper A center (CU(A)) of subunit 2 and heme A of subunit 1 to the active site in subunit 1, a binuclear center (BNC) formed by heme A3 and copper B (CU(B)). The BNC reduces molecular oxygen to 2 water molecules using 4 electrons from cytochrome c in the IMS and 4 protons from the mitochondrial matrix. This is Cytochrome c oxidase subunit 3 (COIII) from Rhipicephalus sanguineus (Brown dog tick).